The sequence spans 530 residues: MPEKLAMSMVDIKDAGSELRDLESGALDTKSSAADVYYEGVELHRTNEFIDNKPSFFNRIAAALNAETKGIEPVTEDEKNDDSILNAATIWFSANMVIVAYSVGALGPLVFGLNFGQSVLVIIFFNILGLIPVALFSLFGVELGLRQMILSRYLAGNITARFFSLVNVIACVGWCVLNISVSAQLLNMVNEGSGHNCPIWAGCLIIAGGTVLVTFFGYSVVHAYEKWSWVPNFAAFLVIIAQLSRSGKFKGGEWVGGATTAGGVLSFGSSVFGSAAGWATYAADYTVYMPKTTSKYKIFFSVVAGLAFPLFFTMILGAACGMAALNDPTWKSYYDKNAMGGVIYAILVPNSLNGFGQFCCVLLALSTVANNVPGMYTVALSAQALWAPLAKIPRVVWTMAGNAATLGISIPATYYFDGFMENFMDSIGYYLAIYIAIACSEHFIYRRSFSAYNIDDWDNWEHLPIGIAGTAALIAGAFGVALGMCQTYWVGEISRLIGEYGGDIGFELGGSWAFIIYNIVRPLELKYFGR.

A Phosphothreonine modification is found at threonine 46. Transmembrane regions (helical) follow at residues 96-116 (MVIV…LNFG), 119-139 (VLVI…FSLF), 162-182 (FFSL…ISVS), 197-217 (CPIW…TFFG), 220-240 (VVHA…LVII), 263-283 (GVLS…TYAA), 298-318 (IFFS…ILGA), 345-365 (AILV…LLAL), 372-392 (VPGM…LAKI), 396-416 (VWTM…TYYF), 418-438 (GFME…IAIA), and 463-483 (LPIG…VALG).

It belongs to the purine-cytosine permease (2.A.39) family.

It is found in the membrane. Probable purine-cytosine permease. In Saccharomyces cerevisiae (strain ATCC 204508 / S288c) (Baker's yeast), this protein is Purine-cytosine permease FCY22 (FCY22).